The following is a 444-amino-acid chain: MKERSTELVDGFRHSVPYINAHRGKTFVIMLGGEAIAHENFPSIINDIGLLHSLGIRLVVVYGARPQIDVALEEQKISPLYHKHTRITDSKTLEVVKQSAGTLQLDITARLSMSLSNTPLQGAHINVVSGNFVIAQPLGVDDGVDYCHSGKIRRIDEEAIHRQLDNHAIVLIGPVAVSVTGESFNLTSEEVATQLAIKLKAQKLIGFCSSQGVVDASGQIVSELLPNQAEERIQALQTTGDYHSGTVRFLRGAVTACRRGVERSHLLSYQADGAIVQELFSRDGIGTQIVMESAEKVRRANINDIGGILELIRPLEQQGILVRRSREQLEMEIDQFTIIERDNLTIACAALYPYQSEKIGEMACVAVHPDYRSSCRGEVLLQRISTQAKQMGLDKLFVLTTRSIHWFQEKGFTPAEIDKLPIEKQALYNYQRRSKILILDLHKE.

The 140-residue stretch at 295–434 folds into the N-acetyltransferase domain; that stretch reads EKVRRANIND…QALYNYQRRS (140 aa).

The protein belongs to the acetyltransferase family. ArgA subfamily. In terms of assembly, homohexamer.

The protein localises to the cytoplasm. The enzyme catalyses L-glutamate + acetyl-CoA = N-acetyl-L-glutamate + CoA + H(+). It functions in the pathway amino-acid biosynthesis; L-arginine biosynthesis; N(2)-acetyl-L-ornithine from L-glutamate: step 1/4. This is Amino-acid acetyltransferase from Proteus mirabilis (strain HI4320).